The chain runs to 646 residues: Acetyl-coenzyme A synthetase (646 aa).

CoA-binding positions include Arg-190–Asn-193 and Thr-309. Residues Gly-385 to Pro-387, Asp-409 to Thr-414, Asp-498, and Arg-513 each bind ATP. Position 521 (Ser-521) interacts with CoA. ATP is bound at residue Arg-524. 3 residues coordinate Mg(2+): Val-535, His-537, and Val-540. A CoA-binding site is contributed by Arg-582. N6-acetyllysine is present on Lys-607.

This sequence belongs to the ATP-dependent AMP-binding enzyme family. It depends on Mg(2+) as a cofactor. Acetylated. Deacetylation by the SIR2-homolog deacetylase activates the enzyme.

It catalyses the reaction acetate + ATP + CoA = acetyl-CoA + AMP + diphosphate. Catalyzes the conversion of acetate into acetyl-CoA (AcCoA), an essential intermediate at the junction of anabolic and catabolic pathways. AcsA undergoes a two-step reaction. In the first half reaction, AcsA combines acetate with ATP to form acetyl-adenylate (AcAMP) intermediate. In the second half reaction, it can then transfer the acetyl group from AcAMP to the sulfhydryl group of CoA, forming the product AcCoA. The chain is Acetyl-coenzyme A synthetase from Pseudoalteromonas translucida (strain TAC 125).